The primary structure comprises 159 residues: Major strawberry allergen Fra a 1-C (159 aa).

It belongs to the BetVI family. In terms of assembly, monomer.

The chain is Major strawberry allergen Fra a 1-C from Fragaria ananassa (Strawberry).